The chain runs to 64 residues: Large ribosomal subunit protein bL35 (64 aa).

This sequence belongs to the bacterial ribosomal protein bL35 family.

The polypeptide is Large ribosomal subunit protein bL35 (Vibrio metschnikovii).